The primary structure comprises 109 residues: Small ribosomal subunit protein eS25 (109 aa).

Residues M1–G36 are disordered. The span at V12 to K25 shows a compositional bias: basic and acidic residues.

The protein belongs to the eukaryotic ribosomal protein eS25 family.

This chain is Small ribosomal subunit protein eS25 (rps25e), found in Sulfurisphaera tokodaii (strain DSM 16993 / JCM 10545 / NBRC 100140 / 7) (Sulfolobus tokodaii).